Reading from the N-terminus, the 546-residue chain is Glucose-6-phosphate isomerase (546 aa).

The active-site Proton donor is E353. Catalysis depends on residues H384 and K512.

This sequence belongs to the GPI family.

The protein localises to the cytoplasm. The enzyme catalyses alpha-D-glucose 6-phosphate = beta-D-fructose 6-phosphate. The protein operates within carbohydrate biosynthesis; gluconeogenesis. It functions in the pathway carbohydrate degradation; glycolysis; D-glyceraldehyde 3-phosphate and glycerone phosphate from D-glucose: step 2/4. In terms of biological role, catalyzes the reversible isomerization of glucose-6-phosphate to fructose-6-phosphate. This chain is Glucose-6-phosphate isomerase, found in Actinobacillus pleuropneumoniae serotype 3 (strain JL03).